A 931-amino-acid chain; its full sequence is ORF4 polyprotein (931 aa).

Post-translationally, proteolytic processing of ORF4 polyprotein yields the VP4a, VP4b and VP4c capsid proteins.

Its subcellular location is the virion. ORF4 polyprotein codes for VP4a, VP4b, and VP4c, three of the four proteins that self-assemble to form the icosahedral capsid. The capsid is made of VP3 (coded by ORF3), VP4a, VP4b and VP4c. This Drosophila melanogaster (Fruit fly) protein is ORF4 polyprotein.